The primary structure comprises 105 residues: MDVDIIDEDENPMLHRTDVRFQLTHEEATPSRLSVRDSLAAKLNKDASEVVVRKLDTKYGMRKTVGHAKVYDSADDAKAVEQDHALERNKIEADEEADEEAAEEA.

Positions 86–105 (LERNKIEADEEADEEAAEEA) are disordered. The span at 93 to 105 (ADEEADEEAAEEA) shows a compositional bias: acidic residues.

It belongs to the eukaryotic ribosomal protein eS24 family.

This Natronomonas pharaonis (strain ATCC 35678 / DSM 2160 / CIP 103997 / JCM 8858 / NBRC 14720 / NCIMB 2260 / Gabara) (Halobacterium pharaonis) protein is Small ribosomal subunit protein eS24.